The sequence spans 259 residues: Methyltransferase afvD (259 aa).

This sequence belongs to the class I-like SAM-binding methyltransferase superfamily.

It participates in secondary metabolite biosynthesis. Functionally, methyltransferase; part of the gene cluster that mediates the biosynthesis of aflavarin, a bicoumarin that exhibits anti-insectan activity against the fungivorous beetle C.hemipterus. This is Methyltransferase afvD from Aspergillus flavus (strain ATCC 200026 / FGSC A1120 / IAM 13836 / NRRL 3357 / JCM 12722 / SRRC 167).